Reading from the N-terminus, the 298-residue chain is CCR4-NOT transcription complex subunit 9 (298 aa).

Belongs to the CNOT9 family. Homodimer. Component of the CCR4-NOT complex.

It localises to the nucleus. It is found in the cytoplasm. The protein resides in the P-body. Its function is as follows. Component of the CCR4-NOT complex which is one of the major cellular mRNA deadenylases and is linked to various cellular processes including bulk mRNA degradation, miRNA-mediated repression, translational repression during translational initiation and general transcription regulation. Additional complex functions may be a consequence of its influence on mRNA expression. Involved in down-regulation of MYB- and JUN-dependent transcription. Enhances ligand-dependent transcriptional activity of nuclear hormone receptors. May play a role in cell differentiation. This chain is CCR4-NOT transcription complex subunit 9, found in Danio rerio (Zebrafish).